A 512-amino-acid polypeptide reads, in one-letter code: Putative ankyrin repeat protein FPV233 (512 aa).

ANK repeat units lie at residues isoleucine 45–glutamine 73, aspartate 77–valine 106, isoleucine 136–methionine 168, histidine 172–isoleucine 201, threonine 205–proline 236, leucine 238–alanine 262, tyrosine 266–alanine 296, and arginine 301–serine 329.

This is Putative ankyrin repeat protein FPV233 from Vertebrata (FPV).